The chain runs to 766 residues: Leucine-rich repeat and fibronectin type III domain-containing protein 1 (766 aa).

The N-terminal stretch at 1–31 is a signal peptide; sequence MAPGPFSSGLFSPPPAALPFLLLLWAGASRG. An LRRNT domain is found at 32 to 65; that stretch reads QPCPGRCICQNVAPTLTMLCAKTGLLFVPPAIDR. Topologically, residues 32–536 are extracellular; sequence QPCPGRCICQ…LRAHFLGGTM (505 aa). LRR repeat units follow at residues 66–87, 90–111, 114–135, 138–159, 163–184, 187–208, and 211–232; these read RVVE…DFAN, SLVH…AFAD, ALRA…QLRG, NLRH…AFDA, TVED…AVGQ, NLNT…TFVQ, and KLVR…GLFL. Asparagine 87 is a glycosylation site (N-linked (GlcNAc...) asparagine). The region spanning 252–298 is the LRRCT domain; the sequence is NPLHCNCELLWLRRLTREDDLETCATPEHLTDRYFWSIPEEEFLCEP. Positions 299–386 constitute an Ig-like domain; that stretch reads PLITRQAGGR…GEATAPVEVC (88 aa). A disulfide bond links cysteine 321 and cysteine 370. A glycan (N-linked (GlcNAc...) asparagine) is linked at asparagine 343. The interval 397–424 is disordered; that stretch reads PAAPPPLTEPGSSDIATPGRPGANDSTS. Residues 424-520 form the Fibronectin type-III domain; it reads SERRLVAAEL…GCVQFTTAGD (97 aa). A helical transmembrane segment spans residues 537–557; it reads IIAIGGVIVASVLVFIVLLMI. The Cytoplasmic portion of the chain corresponds to 558–766; that stretch reads RYKVYGDGDS…STEWMLESTV (209 aa). Disordered stretches follow at residues 568–601 and 645–742; these read RRIK…PPAP and LCLL…GEDG. At serine 713 the chain carries Phosphoserine. The span at 714–727 shows a compositional bias: basic residues; the sequence is YPRRARRTKRHRST. A PDZ-binding motif is present at residues 763–766; that stretch reads ESTV.

The protein belongs to the LRFN family. Can form heteromeric complexes with LRFN2, LRFN3, LRFN4 and LRFN5. Forms homomeric complexes, but not across cell junctions. Interacts with DLG4. Also interacts with DLG1, DLG2, and DLG3. Interacts with 2 AMPA receptor subunits GRIA1 and GRIA2 and NMDA receptor subunit GRIN1. In terms of processing, glycosylated. Predominantly expressed in the brain, with a weak, but broad expression in the cerebral cortex and diencephalic nuclei. Also detected in other parts of the central nervous system, including the olfactory bulb, pons, cerebellum, and medulla oblongata, as well as in the peripheral nervous system, such as the ganglia of cranial nerves and the dorsal root ganglion during gestation.

The protein localises to the membrane. Its subcellular location is the synapse. It is found in the postsynaptic density membrane. Its function is as follows. Promotes neurite outgrowth in hippocampal neurons. Involved in the regulation and maintenance of excitatory synapses. Induces the clustering of excitatory postsynaptic proteins, including DLG4, DLGAP1, GRIA1 and GRIN1. The polypeptide is Leucine-rich repeat and fibronectin type III domain-containing protein 1 (Lrfn1) (Mus musculus (Mouse)).